The sequence spans 374 residues: DNA replication and repair protein RecF (374 aa).

Position 34-41 (glycine 34–threonine 41) interacts with ATP.

Belongs to the RecF family.

The protein localises to the cytoplasm. The RecF protein is involved in DNA metabolism; it is required for DNA replication and normal SOS inducibility. RecF binds preferentially to single-stranded, linear DNA. It also seems to bind ATP. The sequence is that of DNA replication and repair protein RecF from Rhizobium etli (strain ATCC 51251 / DSM 11541 / JCM 21823 / NBRC 15573 / CFN 42).